A 483-amino-acid polypeptide reads, in one-letter code: Glutamyl-tRNA(Gln) amidotransferase subunit A (483 aa).

Residues K76 and S151 each act as charge relay system in the active site. The active-site Acyl-ester intermediate is the S175.

Belongs to the amidase family. GatA subfamily. As to quaternary structure, heterotrimer of A, B and C subunits.

It carries out the reaction L-glutamyl-tRNA(Gln) + L-glutamine + ATP + H2O = L-glutaminyl-tRNA(Gln) + L-glutamate + ADP + phosphate + H(+). Allows the formation of correctly charged Gln-tRNA(Gln) through the transamidation of misacylated Glu-tRNA(Gln) in organisms which lack glutaminyl-tRNA synthetase. The reaction takes place in the presence of glutamine and ATP through an activated gamma-phospho-Glu-tRNA(Gln). In Pseudomonas syringae pv. tomato (strain ATCC BAA-871 / DC3000), this protein is Glutamyl-tRNA(Gln) amidotransferase subunit A.